We begin with the raw amino-acid sequence, 247 residues long: Adenosylcobinamide-GDP ribazoletransferase (247 aa).

Helical transmembrane passes span 34 to 54 (IITF…VFMV), 57 to 77 (AWCG…LMTG), 113 to 133 (GGLA…ELAL), 138 to 158 (ILAS…LLMY), and 194 to 214 (VLLL…AIFI).

Belongs to the CobS family. It depends on Mg(2+) as a cofactor.

The protein resides in the cell inner membrane. The catalysed reaction is alpha-ribazole + adenosylcob(III)inamide-GDP = adenosylcob(III)alamin + GMP + H(+). It catalyses the reaction alpha-ribazole 5'-phosphate + adenosylcob(III)inamide-GDP = adenosylcob(III)alamin 5'-phosphate + GMP + H(+). It functions in the pathway cofactor biosynthesis; adenosylcobalamin biosynthesis; adenosylcobalamin from cob(II)yrinate a,c-diamide: step 7/7. Joins adenosylcobinamide-GDP and alpha-ribazole to generate adenosylcobalamin (Ado-cobalamin). Also synthesizes adenosylcobalamin 5'-phosphate from adenosylcobinamide-GDP and alpha-ribazole 5'-phosphate. This is Adenosylcobinamide-GDP ribazoletransferase from Shigella flexneri serotype 5b (strain 8401).